The primary structure comprises 131 residues: Chorion class high-cysteine HCB protein 12 (131 aa).

A signal peptide spans 1 to 21 (MAAKLIVFVCAIALVAQSVLG). The left arm stretch occupies residues 22–46 (TGCGCCCRGCGCGCGGCGCGCCENF). The segment at 47–110 (RVCSNSAAPT…GNGCVGITRS (64 aa)) is central domain. A right arm (Gly-rich tandem repeats) region spans residues 111-131 (CGGCGCGCGGCGCGCGGCGCC).

The protein belongs to the chorion protein family.

This protein is one of many from the eggshell of the silk moth. The chain is Chorion class high-cysteine HCB protein 12 from Bombyx mori (Silk moth).